Consider the following 63-residue polypeptide: Large ribosomal subunit protein uL29 (63 aa).

The protein belongs to the universal ribosomal protein uL29 family.

The protein is Large ribosomal subunit protein uL29 of Haemophilus influenzae (strain 86-028NP).